The chain runs to 234 residues: Accessory gland protein Acp29AB (234 aa).

Residues 1–21 (MYASNLLYLLALWNLWDLSGG) form the signal peptide. N-linked (GlcNAc...) asparagine glycans are attached at residues Asn-61 and Asn-164. A C-type lectin domain is found at 137–234 (VTCRKMNGHL…SFVCQADQWA (98 aa)). 2 cysteine pairs are disulfide-bonded: Cys-139/Cys-228 and Cys-207/Cys-220.

In terms of tissue distribution, main cells of the accessory gland and in seminal fluid.

It localises to the secreted. Responsible for physiological and behavioral changes in mated female flies. This chain is Accessory gland protein Acp29AB (Acp29AB), found in Drosophila melanogaster (Fruit fly).